A 385-amino-acid polypeptide reads, in one-letter code: Alkanesulfonate monooxygenase (385 aa).

The protein belongs to the SsuD family.

It catalyses the reaction an alkanesulfonate + FMNH2 + O2 = an aldehyde + FMN + sulfite + H2O + 2 H(+). In terms of biological role, catalyzes the desulfonation of aliphatic sulfonates. This is Alkanesulfonate monooxygenase from Burkholderia pseudomallei (strain 1710b).